The following is a 532-amino-acid chain: uncharacterized protein (532 aa).

Disordered regions lie at residues 26 to 84 (KALR…TDSE), 97 to 129 (VFDE…QVGR), and 157 to 470 (SKAA…HTCQ). Positions 30 to 40 (GNNNGSSTSGG) are enriched in low complexity. Over residues 67-80 (DIISQARRQVSLSR) the composition is skewed to polar residues. The segment covering 157 to 181 (SKAAGEESKRHAHFESIQEEEKISE) has biased composition (basic and acidic residues). A compositionally biased stretch (low complexity) spans 198–213 (IQSGSESSDSDSIIFD). The span at 237 to 249 (VEKKIEKPAVKEQ) shows a compositional bias: basic and acidic residues. Composition is skewed to low complexity over residues 259-290 (PTPT…SASE), 298-315 (ESQV…SSSK), and 326-335 (SSSSSASTIS). The span at 347–356 (KTKKPDKKRA) shows a compositional bias: basic residues. Composition is skewed to basic and acidic residues over residues 357–368 (KPDDIRQNKKPE), 389–403 (STVR…ESLK), 410–419 (KSSEKMEKPR), and 437–448 (RDAEREQDIERR). The span at 449 to 461 (REKRARRFRSRRR) shows a compositional bias: basic residues.

This is an uncharacterized protein from Caenorhabditis elegans.